Consider the following 206-residue polypeptide: Sperm acrosome developmental regulator (206 aa).

Residues 180-206 (RRHHVRCHAAPRPNPAQSLKLDAQSPL) are disordered.

Expressed in sperm (at protein level).

It is found in the cytoplasmic vesicle. It localises to the secretory vesicle. The protein resides in the acrosome. In terms of biological role, may play a role in acrosome formation and nucleus shaping during spermiogenesis. The polypeptide is Sperm acrosome developmental regulator (Homo sapiens (Human)).